A 118-amino-acid polypeptide reads, in one-letter code: Basic phospholipase A2 PA-12A (118 aa).

Disulfide bonds link Cys11/Cys71, Cys27/Cys117, Cys29/Cys45, Cys44/Cys98, Cys51/Cys91, Cys60/Cys84, and Cys78/Cys89. Positions 28, 30, and 32 each coordinate Ca(2+). His48 is a catalytic residue. Ca(2+) is bound at residue Asp49. Asp92 is an active-site residue.

The protein belongs to the phospholipase A2 family. Group I subfamily. D49 sub-subfamily. The cofactor is Ca(2+). As to expression, expressed by the venom gland.

The protein localises to the secreted. The enzyme catalyses a 1,2-diacyl-sn-glycero-3-phosphocholine + H2O = a 1-acyl-sn-glycero-3-phosphocholine + a fatty acid + H(+). Functionally, PLA2 catalyzes the calcium-dependent hydrolysis of the 2-acyl groups in 3-sn-phosphoglycerides. This chain is Basic phospholipase A2 PA-12A, found in Pseudechis australis (Mulga snake).